Reading from the N-terminus, the 43-residue chain is Protein PsbN (43 aa).

A helical transmembrane segment spans residues 5 to 27; it reads TLVTISISCLLVSFTGYAIYTSF.

It belongs to the PsbN family.

The protein resides in the plastid. Its subcellular location is the chloroplast thylakoid membrane. In terms of biological role, may play a role in photosystem I and II biogenesis. The sequence is that of Protein PsbN from Welwitschia mirabilis (Tree tumbo).